We begin with the raw amino-acid sequence, 488 residues long: Proline--tRNA ligase (488 aa).

The protein belongs to the class-II aminoacyl-tRNA synthetase family. ProS type 3 subfamily. As to quaternary structure, homodimer.

The protein resides in the cytoplasm. It carries out the reaction tRNA(Pro) + L-proline + ATP = L-prolyl-tRNA(Pro) + AMP + diphosphate. Functionally, catalyzes the attachment of proline to tRNA(Pro) in a two-step reaction: proline is first activated by ATP to form Pro-AMP and then transferred to the acceptor end of tRNA(Pro). The polypeptide is Proline--tRNA ligase (Symbiobacterium thermophilum (strain DSM 24528 / JCM 14929 / IAM 14863 / T)).